The chain runs to 408 residues: Imidazolonepropionase (408 aa).

Fe(3+)-binding residues include histidine 73 and histidine 75. Zn(2+) contacts are provided by histidine 73 and histidine 75. 4-imidazolone-5-propanoate is bound by residues arginine 82, tyrosine 145, and histidine 178. Tyrosine 145 lines the N-formimidoyl-L-glutamate pocket. Histidine 243 is a binding site for Fe(3+). Histidine 243 serves as a coordination point for Zn(2+). 4-imidazolone-5-propanoate is bound at residue glutamine 246. Fe(3+) is bound at residue aspartate 318. Aspartate 318 lines the Zn(2+) pocket. Asparagine 320 and glycine 322 together coordinate N-formimidoyl-L-glutamate. Serine 323 is a 4-imidazolone-5-propanoate binding site.

It belongs to the metallo-dependent hydrolases superfamily. HutI family. Requires Zn(2+) as cofactor. It depends on Fe(3+) as a cofactor.

The protein resides in the cytoplasm. The enzyme catalyses 4-imidazolone-5-propanoate + H2O = N-formimidoyl-L-glutamate. It participates in amino-acid degradation; L-histidine degradation into L-glutamate; N-formimidoyl-L-glutamate from L-histidine: step 3/3. Catalyzes the hydrolytic cleavage of the carbon-nitrogen bond in imidazolone-5-propanoate to yield N-formimidoyl-L-glutamate. It is the third step in the universal histidine degradation pathway. The sequence is that of Imidazolonepropionase from Shewanella sediminis (strain HAW-EB3).